A 344-amino-acid chain; its full sequence is Probable endonuclease lcl3 (344 aa).

A compositionally biased stretch (polar residues) spans 1–11 (MGWWSLGSSGS). Positions 1-55 (MGWWSLGSSGSKADPEKSKANDSKSSNRRQQEEGEQSFIPPPLTSRTSSSSSSKS) are disordered. Positions 13 to 22 (ADPEKSKAND) are enriched in basic and acidic residues. Residues 44–55 (TSRTSSSSSSKS) show a composition bias toward low complexity. Residues 77–93 (LIPTALLTGGILFVVYV) traverse the membrane as a helical segment. The region spanning 115–282 (RSLLGRVTSV…KNRRQGLWKD (168 aa)) is the TNase-like domain. Residue Arg-166 is part of the active site. Ca(2+) is bound at residue Asp-171. Residues Glu-174 and Arg-214 contribute to the active site. A disordered region spans residues 291–327 (FESPREYKTRMQSLDMSAESSSSSSSSSNTEKNPGLV). Over residues 300 to 309 (RMQSLDMSAE) the composition is skewed to polar residues.

This sequence belongs to the LCL3 family.

The protein localises to the mitochondrion. It is found in the membrane. This Talaromyces marneffei (strain ATCC 18224 / CBS 334.59 / QM 7333) (Penicillium marneffei) protein is Probable endonuclease lcl3 (lcl3).